Consider the following 61-residue polypeptide: UPF0434 protein PA14_25520 (61 aa).

This sequence belongs to the UPF0434 family.

This chain is UPF0434 protein PA14_25520, found in Pseudomonas aeruginosa (strain UCBPP-PA14).